A 607-amino-acid chain; its full sequence is Glycerophosphodiester phosphodiesterase domain-containing protein 5 (607 aa).

The Cytoplasmic portion of the chain corresponds to 1 to 42; sequence MVRHQPLQYYEPQLCLSCLTGIYGCRWKRYQRSHDDTTPWER. 2 cysteine pairs are disulfide-bonded: C15–C18 and C25–C571. Residues 43–63 form a helical membrane-spanning segment; sequence LWFLLLVCTFSLTLTWLYFWW. At 64-89 the chain is on the extracellular side; that stretch reads GVHNDYDEFNWYLYNRMGYWSDWSVP. Residues 90–110 form a helical membrane-spanning segment; sequence ILVTSAAAFTYIAGLLVLALC. At 111-125 the chain is on the cytoplasmic side; it reads HIAVGQQLNLHWIHK. The helical transmembrane segment at 126 to 146 threads the bilayer; sequence MGLVVILASTVVAMSAVAQLW. The Extracellular portion of the chain corresponds to 147–160; that stretch reads EDEWEVLLISLQGT. The helical transmembrane segment at 161–181 threads the bilayer; that stretch reads APFLHIGALVAITALSWIVAG. Over 182–192 the chain is Cytoplasmic; that stretch reads QFARAERSSSQ. Residues 193 to 213 traverse the membrane as a helical segment; that stretch reads LTILCTFFAVVFTFYLIPLTI. The Extracellular segment spans residues 214–496; it reads SSPCIMEKKD…PLWIMPPDEY (283 aa). A GP-PDE domain is found at 228–485; it reads PALIGHRGAP…DNSHTLSRVP (258 aa). Residues N301, N336, N352, N374, and N448 are each glycosylated (N-linked (GlcNAc...) asparagine). The chain crosses the membrane as a helical span at residues 497-517; it reads CLMWVTADLISFSLIIGIFVL. The Cytoplasmic segment spans residues 518 to 607; that stretch reads QKWRLGGIRS…AKTVTEQSGH (90 aa). The tract at residues 582–607 is disordered; sequence ANSTATPVGPRNAGSRAKTVTEQSGH.

This sequence belongs to the glycerophosphoryl diester phosphodiesterase family. Interacts with PRDX1; forms a mixed-disulfide with PRDX1, leading to disrupt intramolecular disulfide bond between Cys-25 and Cys-571. Post-translationally, intramolecular disulfide bond between Cys-25 and Cys-571 is reduced by PRDX1. As to expression, detected in brain, lung, heart, kidney and testis.

Its subcellular location is the endomembrane system. It localises to the cytoplasm. The protein resides in the perinuclear region. The protein localises to the cell projection. It is found in the growth cone. It catalyses the reaction a 1,2-diacyl-sn-glycero-3-phospho-(1D-myo-inositol-4,5-bisphosphate) + H2O = 1D-myo-inositol 1,4,5-trisphosphate + a 1,2-diacyl-sn-glycerol + H(+). The enzyme catalyses sn-glycerol 3-phosphocholine + H2O = sn-glycerol 3-phosphate + choline + H(+). Inhibited by high level of NaCl or urea. Its function is as follows. Glycerophosphodiester phosphodiesterase that promotes neurite formation and drives spinal motor neuron differentiation. Mediates the cleavage of glycosylphosphatidylinositol (GPI) anchor of target proteins: removes the GPI-anchor of RECK, leading to release RECK from the plasma membrane. May contribute to the osmotic regulation of cellular glycerophosphocholine. The polypeptide is Glycerophosphodiester phosphodiesterase domain-containing protein 5 (Mus musculus (Mouse)).